Consider the following 564-residue polypeptide: Dihydroxy-acid dehydratase (564 aa).

Residue D80 coordinates Mg(2+). Position 121 (C121) interacts with [2Fe-2S] cluster. Positions 122 and 123 each coordinate Mg(2+). Residue K123 is modified to N6-carboxylysine. C194 provides a ligand contact to [2Fe-2S] cluster. Residue E447 coordinates Mg(2+). S473 functions as the Proton acceptor in the catalytic mechanism.

It belongs to the IlvD/Edd family. As to quaternary structure, homodimer. The cofactor is [2Fe-2S] cluster. Requires Mg(2+) as cofactor.

It catalyses the reaction (2R)-2,3-dihydroxy-3-methylbutanoate = 3-methyl-2-oxobutanoate + H2O. It carries out the reaction (2R,3R)-2,3-dihydroxy-3-methylpentanoate = (S)-3-methyl-2-oxopentanoate + H2O. The protein operates within amino-acid biosynthesis; L-isoleucine biosynthesis; L-isoleucine from 2-oxobutanoate: step 3/4. Its pathway is amino-acid biosynthesis; L-valine biosynthesis; L-valine from pyruvate: step 3/4. In terms of biological role, functions in the biosynthesis of branched-chain amino acids. Catalyzes the dehydration of (2R,3R)-2,3-dihydroxy-3-methylpentanoate (2,3-dihydroxy-3-methylvalerate) into 2-oxo-3-methylpentanoate (2-oxo-3-methylvalerate) and of (2R)-2,3-dihydroxy-3-methylbutanoate (2,3-dihydroxyisovalerate) into 2-oxo-3-methylbutanoate (2-oxoisovalerate), the penultimate precursor to L-isoleucine and L-valine, respectively. This chain is Dihydroxy-acid dehydratase, found in Listeria welshimeri serovar 6b (strain ATCC 35897 / DSM 20650 / CCUG 15529 / CIP 8149 / NCTC 11857 / SLCC 5334 / V8).